The chain runs to 234 residues: Large ribosomal subunit protein uL1 (234 aa).

This sequence belongs to the universal ribosomal protein uL1 family. As to quaternary structure, part of the 50S ribosomal subunit.

Its function is as follows. Binds directly to 23S rRNA. The L1 stalk is quite mobile in the ribosome, and is involved in E site tRNA release. Protein L1 is also a translational repressor protein, it controls the translation of the L11 operon by binding to its mRNA. The polypeptide is Large ribosomal subunit protein uL1 (Tolumonas auensis (strain DSM 9187 / NBRC 110442 / TA 4)).